The sequence spans 325 residues: Phospho-N-acetylmuramoyl-pentapeptide-transferase (325 aa).

Helical transmembrane passes span 5 to 25, 57 to 77, 81 to 101, 117 to 137, 146 to 166, 178 to 198, 200 to 220, 227 to 247, 252 to 272, and 304 to 324; these read VLLLTLILSFVITVILSPIFI, LMILLSILVSSLFVSFQLSIF, VLLLLLVTIGFGVLGFIDDFI, LIGQLVVAVLFYLGLRNMGLS, SLSIDFGWFYLPLVIVMLVGA, GLVAGTGAIAFGAFAIIAWAT, YFEVAIFSAAVVGAVLGFLVF, VFMGDTGSLALGGAIAAIAIM, ILLIIIGGVFVIETLSVIIQV, and VTFWTVGLLFAMLAIYLEVWI.

The protein belongs to the glycosyltransferase 4 family. MraY subfamily. Requires Mg(2+) as cofactor.

Its subcellular location is the cell membrane. It carries out the reaction UDP-N-acetyl-alpha-D-muramoyl-L-alanyl-gamma-D-glutamyl-meso-2,6-diaminopimeloyl-D-alanyl-D-alanine + di-trans,octa-cis-undecaprenyl phosphate = di-trans,octa-cis-undecaprenyl diphospho-N-acetyl-alpha-D-muramoyl-L-alanyl-D-glutamyl-meso-2,6-diaminopimeloyl-D-alanyl-D-alanine + UMP. The protein operates within cell wall biogenesis; peptidoglycan biosynthesis. Functionally, catalyzes the initial step of the lipid cycle reactions in the biosynthesis of the cell wall peptidoglycan: transfers peptidoglycan precursor phospho-MurNAc-pentapeptide from UDP-MurNAc-pentapeptide onto the lipid carrier undecaprenyl phosphate, yielding undecaprenyl-pyrophosphoryl-MurNAc-pentapeptide, known as lipid I. The sequence is that of Phospho-N-acetylmuramoyl-pentapeptide-transferase from Halalkalibacterium halodurans (strain ATCC BAA-125 / DSM 18197 / FERM 7344 / JCM 9153 / C-125) (Bacillus halodurans).